The following is a 456-amino-acid chain: tRNA-2-methylthio-N(6)-dimethylallyladenosine synthase (456 aa).

The MTTase N-terminal domain maps to 6 to 123 (KHVYIETYGC…LPNLIEEAQR (118 aa)). Residues Cys15, Cys52, Cys86, Cys160, Cys164, and Cys167 each coordinate [4Fe-4S] cluster. The region spanning 146–380 (RAEGPTAYVS…RILEMAASIS (235 aa)) is the Radical SAM core domain. The TRAM domain maps to 381-444 (EAMVGTEQWV…KNSLRGRLIE (64 aa)).

Belongs to the methylthiotransferase family. MiaB subfamily. In terms of assembly, monomer. Requires [4Fe-4S] cluster as cofactor.

The protein localises to the cytoplasm. The enzyme catalyses N(6)-dimethylallyladenosine(37) in tRNA + (sulfur carrier)-SH + AH2 + 2 S-adenosyl-L-methionine = 2-methylsulfanyl-N(6)-dimethylallyladenosine(37) in tRNA + (sulfur carrier)-H + 5'-deoxyadenosine + L-methionine + A + S-adenosyl-L-homocysteine + 2 H(+). Catalyzes the methylthiolation of N6-(dimethylallyl)adenosine (i(6)A), leading to the formation of 2-methylthio-N6-(dimethylallyl)adenosine (ms(2)i(6)A) at position 37 in tRNAs that read codons beginning with uridine. The polypeptide is tRNA-2-methylthio-N(6)-dimethylallyladenosine synthase (Dichelobacter nodosus (strain VCS1703A)).